A 260-amino-acid polypeptide reads, in one-letter code: Hemin import ATP-binding protein HmuV (260 aa).

The ABC transporter domain maps to 6–242; it reads LHADNLHYRA…VQLRACYQAD (237 aa). 38–45 provides a ligand contact to ATP; sequence GPNGAGKS.

It belongs to the ABC transporter superfamily. Heme (hemin) importer (TC 3.A.1.14.5) family. As to quaternary structure, the complex is composed of two ATP-binding proteins (HmuV), two transmembrane proteins (HmuU) and a solute-binding protein (HmuT).

It localises to the cell inner membrane. Functionally, part of the ABC transporter complex HmuTUV involved in hemin import. Responsible for energy coupling to the transport system. The polypeptide is Hemin import ATP-binding protein HmuV (Sodalis glossinidius (strain morsitans)).